Reading from the N-terminus, the 454-residue chain is tRNA modification GTPase MnmE (454 aa).

(6S)-5-formyl-5,6,7,8-tetrahydrofolate-binding residues include Arg-23, Glu-80, and Lys-120. Positions 216–377 constitute a TrmE-type G domain; sequence GMKVVIAGRP…LRNHLKQSMG (162 aa). Asn-226 provides a ligand contact to K(+). GTP is bound by residues 226–231, 245–251, 270–273, 335–338, and 358–360; these read NAGKSS, TDIAGTT, DTAG, NKAD, and SAR. Ser-230 contacts Mg(2+). Positions 245, 247, and 250 each coordinate K(+). Residue Thr-251 coordinates Mg(2+). Lys-454 contacts (6S)-5-formyl-5,6,7,8-tetrahydrofolate.

This sequence belongs to the TRAFAC class TrmE-Era-EngA-EngB-Septin-like GTPase superfamily. TrmE GTPase family. Homodimer. Heterotetramer of two MnmE and two MnmG subunits. Requires K(+) as cofactor.

Its subcellular location is the cytoplasm. Exhibits a very high intrinsic GTPase hydrolysis rate. Involved in the addition of a carboxymethylaminomethyl (cmnm) group at the wobble position (U34) of certain tRNAs, forming tRNA-cmnm(5)s(2)U34. The sequence is that of tRNA modification GTPase MnmE from Salmonella typhimurium (strain LT2 / SGSC1412 / ATCC 700720).